The sequence spans 420 residues: UDP-N-acetylglucosamine 1-carboxyvinyltransferase (420 aa).

K22–N23 lines the phosphoenolpyruvate pocket. Position 92 (R92) interacts with UDP-N-acetyl-alpha-D-glucosamine. The active-site Proton donor is C116. C116 bears the 2-(S-cysteinyl)pyruvic acid O-phosphothioketal mark. Residues R121 to L125, K161 to V164, D306, and I328 each bind UDP-N-acetyl-alpha-D-glucosamine.

This sequence belongs to the EPSP synthase family. MurA subfamily.

It localises to the cytoplasm. It catalyses the reaction phosphoenolpyruvate + UDP-N-acetyl-alpha-D-glucosamine = UDP-N-acetyl-3-O-(1-carboxyvinyl)-alpha-D-glucosamine + phosphate. Its pathway is cell wall biogenesis; peptidoglycan biosynthesis. Cell wall formation. Adds enolpyruvyl to UDP-N-acetylglucosamine. In Yersinia pseudotuberculosis serotype O:1b (strain IP 31758), this protein is UDP-N-acetylglucosamine 1-carboxyvinyltransferase.